The following is a 130-amino-acid chain: Small ribosomal subunit protein uS9 (130 aa).

The tract at residues 102–130 (GFLTRDPRMKERKKYGLKKARRSPQFSKR) is disordered. Residues 111–130 (KERKKYGLKKARRSPQFSKR) show a composition bias toward basic residues.

It belongs to the universal ribosomal protein uS9 family.

In Clostridium botulinum (strain ATCC 19397 / Type A), this protein is Small ribosomal subunit protein uS9.